The chain runs to 312 residues: MSFRHTSVMPDQAVALLNCEKGKIVADCTLGGGGHAVRIAEQILPEGLLIGIDKDPAALAHAKQALSVFGERVLYVRGNFADFSEILSSLDIPAVDGVLLDLGLSFYQIDGSGRGFSFRKDEPLDMRMDPDQSLTAADLVNQSAEADLVRIFREFGEERYASRIARRIVEARRSAPVTTSGQLARIVTDAYPAKERHTAKIDPATRVFMALRIAVNTELENLERFLDTVIDRIKPGGRICVLSFHSLEDRMVKRRMKLWEKACVCPPGLPVCSCSKQRECRIVTRKALVPTAEEVQANPMARSVRLRAAEKV.

Residues 33 to 35, Asp-53, Phe-80, Asp-101, and Gln-108 each bind S-adenosyl-L-methionine; that span reads GGH.

Belongs to the methyltransferase superfamily. RsmH family.

It is found in the cytoplasm. The catalysed reaction is cytidine(1402) in 16S rRNA + S-adenosyl-L-methionine = N(4)-methylcytidine(1402) in 16S rRNA + S-adenosyl-L-homocysteine + H(+). Functionally, specifically methylates the N4 position of cytidine in position 1402 (C1402) of 16S rRNA. The protein is Ribosomal RNA small subunit methyltransferase H of Desulfosudis oleivorans (strain DSM 6200 / JCM 39069 / Hxd3) (Desulfococcus oleovorans).